A 222-amino-acid polypeptide reads, in one-letter code: Twisted gastrulation protein homolog 1 (222 aa).

The first 24 residues, 1–24 (MKSHYIVLALASLTFLLCLPVSQS), serve as a signal peptide directing secretion. Residues Asn80 and Asn146 are each glycosylated (N-linked (GlcNAc...) asparagine).

Belongs to the twisted gastrulation protein family. Interacts with CHRD and/or BMP4. This interaction enhances CHRD/BMP4 complex formation. Interacts with BMP7. In terms of tissue distribution, expressed in lymph node, liver, kidney, and lung. Expression in the kidney was stronger in the medulla than in the cortex, particularly in the cells surrounding the medullary tubules. Expressed in growth plate cartilage of long bones, ribs, and digits and to a lesser extent also in the resting zone of the epiphysis, trabecular bone, and vertebral cartilage. Expression seems to be absent from other skeletal tissues including muscle, skin, and fibroblasts.

Its subcellular location is the secreted. Its function is as follows. May be involved in dorsoventral axis formation. Seems to antagonize BMP signaling by forming ternary complexes with CHRD and BMPs, thereby preventing BMPs from binding to their receptors. In addition to the anti-BMP function, also has pro-BMP activity, partly mediated by cleavage and degradation of CHRD, which releases BMPs from ternary complexes. May be an important modulator of BMP-regulated cartilage development and chondrocyte differentiation. May play a role in thymocyte development. The chain is Twisted gastrulation protein homolog 1 (Twsg1) from Mus musculus (Mouse).